The chain runs to 450 residues: Tubulin alpha-1 chain (450 aa).

GTP contacts are provided by glutamine 11, glutamate 71, glycine 144, threonine 145, threonine 179, asparagine 206, and asparagine 228. Residue glutamate 71 participates in Mg(2+) binding. Glutamate 254 is a catalytic residue.

It belongs to the tubulin family. Dimer of alpha and beta chains. A typical microtubule is a hollow water-filled tube with an outer diameter of 25 nm and an inner diameter of 15 nM. Alpha-beta heterodimers associate head-to-tail to form protofilaments running lengthwise along the microtubule wall with the beta-tubulin subunit facing the microtubule plus end conferring a structural polarity. Microtubules usually have 13 protofilaments but different protofilament numbers can be found in some organisms and specialized cells. The cofactor is Mg(2+). In terms of processing, undergoes a tyrosination/detyrosination cycle, the cyclic removal and re-addition of a C-terminal tyrosine residue by the enzymes tubulin tyrosine carboxypeptidase (TTCP) and tubulin tyrosine ligase (TTL), respectively.

The protein resides in the cytoplasm. It is found in the cytoskeleton. It carries out the reaction GTP + H2O = GDP + phosphate + H(+). Its function is as follows. Tubulin is the major constituent of microtubules, a cylinder consisting of laterally associated linear protofilaments composed of alpha- and beta-tubulin heterodimers. Microtubules grow by the addition of GTP-tubulin dimers to the microtubule end, where a stabilizing cap forms. Below the cap, tubulin dimers are in GDP-bound state, owing to GTPase activity of alpha-tubulin. The polypeptide is Tubulin alpha-1 chain (TUBA1) (Oryza sativa subsp. japonica (Rice)).